We begin with the raw amino-acid sequence, 249 residues long: NADH-quinone oxidoreductase subunit C (249 aa).

The protein belongs to the complex I 30 kDa subunit family. As to quaternary structure, NDH-1 is composed of 14 different subunits. Subunits NuoB, C, D, E, F, and G constitute the peripheral sector of the complex.

It is found in the cell inner membrane. The enzyme catalyses a quinone + NADH + 5 H(+)(in) = a quinol + NAD(+) + 4 H(+)(out). In terms of biological role, NDH-1 shuttles electrons from NADH, via FMN and iron-sulfur (Fe-S) centers, to quinones in the respiratory chain. The immediate electron acceptor for the enzyme in this species is believed to be ubiquinone. Couples the redox reaction to proton translocation (for every two electrons transferred, four hydrogen ions are translocated across the cytoplasmic membrane), and thus conserves the redox energy in a proton gradient. The sequence is that of NADH-quinone oxidoreductase subunit C from Stenotrophomonas maltophilia (strain R551-3).